We begin with the raw amino-acid sequence, 194 residues long: 5'-deoxynucleotidase PBPRA2627 (194 aa).

Residues 18–19 (RW) and His33 each bind substrate. The region spanning 30–142 (ISEHSLQVAF…VKQADSLCAY (113 aa)) is the HD domain. Positions 33, 68, and 69 each coordinate a divalent metal cation. Residues Asp69, 77-80 (DMPT), and Asp137 each bind substrate. Position 137 (Asp137) interacts with a divalent metal cation.

This sequence belongs to the 5DNU family. As to quaternary structure, homodimer. Requires a divalent metal cation as cofactor.

The protein localises to the cytoplasm. It carries out the reaction a 2'-deoxyribonucleoside 5'-phosphate + H2O = a 2'-deoxyribonucleoside + phosphate. Functionally, catalyzes the strictly specific dephosphorylation of 2'-deoxyribonucleoside 5'-monophosphates. This chain is 5'-deoxynucleotidase PBPRA2627, found in Photobacterium profundum (strain SS9).